A 446-amino-acid chain; its full sequence is MTFSNRVSVAIIGGGIGGLSLAIGLLQNKNLDVAIYETAPKFAEIGAGVALGPNAQHALALISPAAEHAFRIHATTSLSPEFEHVWFDFRNGNAGEKDGEVLSKVENETGQQTVHRAKFLDELVKLIPREIAHFGKRLIHIQKDPVSGGAQYKLFFEDGTTASADCVIGADGIHSSVRKHLLGESHPAATPVFTGTVVYRGLIPMDVARDAIGEFADNSYMWCGDGGMVMTYPIDHGETLNVVGTRNDKGRWDGPPYTRPVDEETVRNDFMGWGEIPSKVIQLLKQPTMWAILDHYPAPYYYSGNVAIMGDAAHATTPFQGAGAGQAIEDALVLSTLFQRVTHSGLVRPALAAYNNVRLRRTQKVVATSRDALRLFCFNDRYVDGDAQRWREVWNGRMDWLWGMDLEKQNRDAVNLFADIVEKQSSARETMPKFGPVPFPVATSTV.

Residues 7–27 (VSVAIIGGGIGGLSLAIGLLQ) traverse the membrane as a helical segment. Glu37 and Ala50 together coordinate FAD. Asn107 is a glycosylation site (N-linked (GlcNAc...) asparagine). Arg116 is an FAD binding site. Arg200 is an active-site residue. Residues Asp311 and Ala324 each coordinate FAD.

This sequence belongs to the paxM FAD-dependent monooxygenase family. FAD serves as cofactor.

It localises to the membrane. The catalysed reaction is 6-methylsalicylate + AH2 + O2 + H(+) = 3-methylcatechol + A + CO2 + H2O. It participates in secondary metabolite biosynthesis. Functionally, 6-methylsalicylate 1-monooxygenase; part of the gene cluster that mediates the biosynthesis of terreic acid, a quinone epoxide inhibitor of Bruton's tyrosine kinase. The first step of the pathway is the synthesis of 6-methylsalicylic acid (6-MSA) by the 6-methylsalicylic acid synthase atX. In the biosynthesis of 6-MSA, atX utilizes one acetyl-CoA and three malonyl-CoAs as its substrates and catalyzes a series of programmed reactions including Claisen condensation, reduction, aldol cyclization, and the hydrolytic cleavage that yields 6-MSA. The 6-methylsalicylate 1-monooxygenase atA then catalyzes the decarboxylative hydroxylation of 6-MSA to 3-methylcatechol. The next step is the conversion of 3-methylcatechol to 3-methyl-1,2,4-benzenetriol by cytochrome P450 monooxygenase atE, which is enhanced by cytochrome P450 monooxygenase atG. Then, the epoxidase atD catalyzes the epoxidation and hydroxyl oxidation of 3-methyl-1,2,4-benzenetriol to terremutin. Lastly, GMC oxidoreductase atC oxidizes terremutin to terreic acid. This chain is 6-methylsalicylate 1-monooxygenase atA, found in Aspergillus terreus (strain NIH 2624 / FGSC A1156).